The chain runs to 202 residues: Small ribosomal subunit protein uS4c (202 aa).

Residues 90–159 (MRLDNIIFRL…TKNYEFSQTY (70 aa)) form the S4 RNA-binding domain.

The protein belongs to the universal ribosomal protein uS4 family. As to quaternary structure, part of the 30S ribosomal subunit. Contacts protein S5. The interaction surface between S4 and S5 is involved in control of translational fidelity.

It is found in the plastid. It localises to the chloroplast. Functionally, one of the primary rRNA binding proteins, it binds directly to 16S rRNA where it nucleates assembly of the body of the 30S subunit. In terms of biological role, with S5 and S12 plays an important role in translational accuracy. This Huperzia lucidula (Shining clubmoss) protein is Small ribosomal subunit protein uS4c (rps4).